The primary structure comprises 315 residues: tRNA-dihydrouridine(16) synthase (315 aa).

FMN-binding positions include 7–9 and Q68; that span reads PME. C98 (proton donor) is an active-site residue. Residues K139, 199–201, and 223–224 each bind FMN; these read NGE and GR.

This sequence belongs to the Dus family. DusC subfamily. It depends on FMN as a cofactor.

It catalyses the reaction 5,6-dihydrouridine(16) in tRNA + NADP(+) = uridine(16) in tRNA + NADPH + H(+). The catalysed reaction is 5,6-dihydrouridine(16) in tRNA + NAD(+) = uridine(16) in tRNA + NADH + H(+). Its function is as follows. Catalyzes the synthesis of 5,6-dihydrouridine (D), a modified base found in the D-loop of most tRNAs, via the reduction of the C5-C6 double bond in target uridines. Specifically modifies U16 in tRNAs. This is tRNA-dihydrouridine(16) synthase from Aquipseudomonas alcaligenes (Pseudomonas alcaligenes).